The primary structure comprises 624 residues: Laccase-1 (624 aa).

Residues 1 to 20 (MRGLAKLFFLSCSFVSLVSS) form the signal peptide. Plastocyanin-like domains lie at 72 to 183 (FASP…HSPN) and 195 to 343 (DRIV…CMFG). 2 residues coordinate Cu cation: histidine 117 and histidine 119. A disulfide bridge connects residues cysteine 138 and cysteine 578. The N-linked (GlcNAc...) asparagine glycan is linked to asparagine 149. Cu cation-binding residues include histidine 162 and histidine 164. 2 N-linked (GlcNAc...) asparagine glycosylation sites follow: asparagine 242 and asparagine 430. Residues 469–562 (IIINNLDTVI…GKLAVIVVQP (94 aa)) enclose the Plastocyanin-like 3 domain. Cu cation-binding residues include histidine 480, histidine 483, and histidine 485. Asparagine 503 carries N-linked (GlcNAc...) asparagine glycosylation. Histidine 543, cysteine 544, histidine 545, and histidine 549 together coordinate Cu cation. The segment at 579–604 (ANTDPNAFGPAKRSSSPSIQSSKTSS) is disordered. Positions 592-604 (SSSPSIQSSKTSS) are enriched in low complexity.

Belongs to the multicopper oxidase family. Cu cation serves as cofactor.

Its subcellular location is the secreted. The protein localises to the cell wall. The catalysed reaction is 4 hydroquinone + O2 = 4 benzosemiquinone + 2 H2O. Its function is as follows. Laccase that catalyzes the oxidation of certain aromatic compounds, including L-dopa, to quinones, which then polymerize to melanin. Able to oxidize a wide variety of aromatic diphenol and diamino groups in the ortho, meta, and para positions but not monophenolic groups such as in phenol, tyramine, or tyrosine. Plays an important role in virulence. Plays a role in dissemination to extrapulmonary sites but is not involved in pulmonary growth or in elicitation of cellular immune responses in the lung. The polypeptide is Laccase-1 (Cryptococcus neoformans var. neoformans serotype D (strain B-3501A) (Filobasidiella neoformans)).